The primary structure comprises 361 residues: S-adenosylmethionine-dependent nucleotide dehydratase RSAD2 (361 aa).

A Radical SAM core domain is found at 69–289 (PTTPTSVNYH…LERHKEVSCL (221 aa)). Residues Cys-83, Cys-87, and Cys-90 each contribute to the [4Fe-4S] cluster site. Lys-197 is modified (N6-acetyllysine). A Glycyl lysine isopeptide (Lys-Gly) (interchain with G-Cter in ubiquitin) cross-link involves residue Lys-206.

The protein belongs to the radical SAM superfamily. RSAD2 family. In terms of assembly, homodimer. Interacts with IRAK1 and TRAF6. Interacts with FPPS. Interacts with HADHB. Interacts (via C-terminus) with VAPA/VAP33 (via C-terminus). (Microbial infection) Interacts with human cytomegalovirus/HHV-5 protein vMIA/UL37; this interaction results in RSAD2/viperin relocalization from the endoplasmic reticulum to the mitochondria. As to quaternary structure, (Microbial infection) Interacts (via N-terminus) with enterovirus A71 protein 2C; this interaction inhibits viral replication. In terms of assembly, (Microbial infection) Interacts with herpes simplex virus 1/HHV-1 glycoprotein D; this interaction inhibits HHV-1 replication by facilitating IRF7-mediated IFN-beta production. It depends on [4Fe-4S] cluster as a cofactor. In terms of processing, acetylated by HAT1. HAT1-mediated acetylation of Lys-197 in turn recruits UBE4A that stimulates RSAD2 polyubiquitination leading to proteasomal degradation. 'Lys-6'-linked polyubiquitination at Lys-206 leads to RSAD2 protein degradation.

It localises to the endoplasmic reticulum membrane. Its subcellular location is the golgi apparatus. The protein localises to the endoplasmic reticulum. The protein resides in the lipid droplet. It is found in the mitochondrion. It localises to the mitochondrion inner membrane. Its subcellular location is the mitochondrion outer membrane. The catalysed reaction is CTP + AH2 + S-adenosyl-L-methionine = 3'-deoxy-3',4'-didehydro-CTP + 5'-deoxyadenosine + L-methionine + A + H2O + H(+). With respect to regulation, IRAK1 and TRAF6 synergistically activate RSAD2 increasing its activity with CTP as substrate about 10-fold. Functionally, interferon-inducible antiviral protein which plays a major role in the cell antiviral state induced by type I and type II interferon. Catalyzes the conversion of cytidine triphosphate (CTP) to 3'-deoxy-3',4'-didehydro-CTP (ddhCTP) via a SAM-dependent radical mechanism. In turn, ddhCTP acts as a chain terminator for the RNA-dependent RNA polymerases from multiple viruses and directly inhibits viral replication. Therefore, inhibits a wide range of DNA and RNA viruses, including human cytomegalovirus (HCMV), hepatitis C virus (HCV), west Nile virus (WNV), dengue virus, sindbis virus, influenza A virus, sendai virus, vesicular stomatitis virus (VSV), zika virus, and human immunodeficiency virus (HIV-1). Also promotes TLR7 and TLR9-dependent production of IFN-beta production in plasmacytoid dendritic cells (pDCs) by facilitating 'Lys-63'-linked ubiquitination of IRAK1 by TRAF6. Plays a role in CD4+ T-cells activation and differentiation. Facilitates T-cell receptor (TCR)-mediated GATA3 activation and optimal T-helper 2 (Th2) cytokine production by modulating NFKB1 and JUNB activities. Can inhibit secretion of soluble proteins. The polypeptide is S-adenosylmethionine-dependent nucleotide dehydratase RSAD2 (Homo sapiens (Human)).